The primary structure comprises 478 residues: Proline--tRNA ligase (478 aa).

It belongs to the class-II aminoacyl-tRNA synthetase family. ProS type 3 subfamily. Homodimer.

It localises to the cytoplasm. It catalyses the reaction tRNA(Pro) + L-proline + ATP = L-prolyl-tRNA(Pro) + AMP + diphosphate. Functionally, catalyzes the attachment of proline to tRNA(Pro) in a two-step reaction: proline is first activated by ATP to form Pro-AMP and then transferred to the acceptor end of tRNA(Pro). This is Proline--tRNA ligase from Clostridium botulinum (strain Loch Maree / Type A3).